Consider the following 358-residue polypeptide: Arogenate dehydrogenase 2, chloroplastic (358 aa).

Residues 1-36 (MLLHFSPAKPLISPPNLRRNSPTFLISPPRSLRIRA) constitute a chloroplast transit peptide. The 280-residue stretch at 59–338 (LKIAVLGFGN…KKTEQKLLND (280 aa)) folds into the Prephenate/arogenate dehydrogenase domain. Residues 336-358 (LNDGGVVPMNDISSSSSSSSSSS) form a disordered region. The span at 348 to 358 (SSSSSSSSSSS) shows a compositional bias: low complexity.

This sequence belongs to the prephenate/arogenate dehydrogenase family. Expressed in roots, stems, leaves, flowers, siliques and seeds. More abundant in seeds.

The protein localises to the plastid. The protein resides in the chloroplast. It catalyses the reaction L-arogenate + NADP(+) = L-tyrosine + CO2 + NADPH. The protein operates within amino-acid biosynthesis; L-tyrosine biosynthesis; L-tyrosine from L-arogenate (NADP(+) route): step 1/1. Its function is as follows. Involved in the biosynthesis of tyrosine. Has a weak prephenate dehydrogenase activity. The polypeptide is Arogenate dehydrogenase 2, chloroplastic (TYRAAT2) (Arabidopsis thaliana (Mouse-ear cress)).